The primary structure comprises 108 residues: Tetrahydromethanopterin S-methyltransferase subunit B (108 aa).

A helical membrane pass occupies residues 79-99; it reads GMFFGFWVTMAILVLVTILAV.

Belongs to the MtrB family. The complex is composed of 8 subunits; MtrA, MtrB, MtrC, MtrD, MtrE, MtrF, MtrG and MtrH.

It is found in the cell membrane. The enzyme catalyses 5-methyl-5,6,7,8-tetrahydromethanopterin + coenzyme M + 2 Na(+)(in) = 5,6,7,8-tetrahydromethanopterin + methyl-coenzyme M + 2 Na(+)(out). It participates in one-carbon metabolism; methanogenesis from CO(2); methyl-coenzyme M from 5,10-methylene-5,6,7,8-tetrahydromethanopterin: step 2/2. Its function is as follows. Part of a complex that catalyzes the formation of methyl-coenzyme M and tetrahydromethanopterin from coenzyme M and methyl-tetrahydromethanopterin. This is an energy-conserving, sodium-ion translocating step. The sequence is that of Tetrahydromethanopterin S-methyltransferase subunit B from Methanococcus maripaludis (strain C5 / ATCC BAA-1333).